The sequence spans 347 residues: ATP-dependent (S)-NAD(P)H-hydrate dehydratase (347 aa).

Residues 53 to 344 (TLQLVRNIIP…AEVGAAFSKL (292 aa)) enclose the YjeF C-terminal domain. Tyr85 is subject to Phosphotyrosine. Residues Gly153 and 206–212 (NHVEFSR) each bind (6S)-NADPHX. Asn240 is a glycosylation site (N-linked (GlcNAc...) asparagine). ATP-binding positions include 246-250 (KGERD) and 265-274 (GSSRRCGGQG). Asp275 provides a ligand contact to (6S)-NADPHX. Asn297 carries N-linked (GlcNAc...) asparagine glycosylation.

Belongs to the NnrD/CARKD family. Requires Mg(2+) as cofactor.

The protein resides in the mitochondrion. The enzyme catalyses (6S)-NADHX + ATP = ADP + phosphate + NADH + H(+). It carries out the reaction (6S)-NADPHX + ATP = ADP + phosphate + NADPH + H(+). Functionally, catalyzes the dehydration of the S-form of NAD(P)HX at the expense of ATP, which is converted to ADP. Together with NAD(P)HX epimerase, which catalyzes the epimerization of the S- and R-forms, the enzyme allows the repair of both epimers of NAD(P)HX, a damaged form of NAD(P)H that is a result of enzymatic or heat-dependent hydration. This chain is ATP-dependent (S)-NAD(P)H-hydrate dehydratase, found in Homo sapiens (Human).